The primary structure comprises 455 residues: Acid sphingomyelinase-like phosphodiesterase 3b (455 aa).

The signal sequence occupies residues 1 to 18; sequence MRLLAWLIFLANWGGARA. Residues Asp-28 and His-30 each coordinate Zn(2+). A disulfide bridge connects residues Cys-45 and Cys-64. Asn-72 is a glycosylation site (N-linked (GlcNAc...) asparagine). The Zn(2+) site is built by Asp-93 and Asn-134. Asn-164 carries an N-linked (GlcNAc...) asparagine glycan. Residues His-236, His-277, and His-279 each contribute to the Zn(2+) site. Asn-343 is a glycosylation site (N-linked (GlcNAc...) asparagine). 2 disulfides stabilise this stretch: Cys-405-Cys-409 and Cys-415-Cys-428.

The protein belongs to the acid sphingomyelinase family. As to quaternary structure, interacts with TLR4, TLR7, TLR8 and TLR9. It depends on Zn(2+) as a cofactor. In terms of processing, N-glycosylated.

It is found in the secreted. It localises to the cell membrane. Lipid-modulating phosphodiesterase. Active on the surface of macrophages and dendritic cells and strongly influences macrophage lipid composition and membrane fluidity. Acts as a negative regulator of Toll-like receptor signaling. Has in vitro phosphodiesterase activity, but the physiological substrate is unknown. Lacks activity with phosphocholine-containing lipids, but can cleave CDP-choline, and can release phosphate from ATP and ADP (in vitro). The protein is Acid sphingomyelinase-like phosphodiesterase 3b (SMPDL3B) of Homo sapiens (Human).